Reading from the N-terminus, the 411-residue chain is Phosphoglycerate kinase (411 aa).

Substrate contacts are provided by residues aspartate 22–asparagine 24, arginine 37, histidine 60–arginine 63, arginine 123, and arginine 165. ATP-binding positions include lysine 216, glutamate 339, and glycine 366–serine 369.

This sequence belongs to the phosphoglycerate kinase family. Monomer.

It is found in the cytoplasm. The enzyme catalyses (2R)-3-phosphoglycerate + ATP = (2R)-3-phospho-glyceroyl phosphate + ADP. Its pathway is carbohydrate degradation; glycolysis; pyruvate from D-glyceraldehyde 3-phosphate: step 2/5. This chain is Phosphoglycerate kinase (pgk), found in Mycoplasma genitalium (strain ATCC 33530 / DSM 19775 / NCTC 10195 / G37) (Mycoplasmoides genitalium).